The following is a 758-amino-acid chain: 5-methyltetrahydropteroyltriglutamate--homocysteine methyltransferase (758 aa).

5-methyltetrahydropteroyltri-L-glutamate contacts are provided by residues 15 to 18 and lysine 114; that span reads RELK. L-homocysteine contacts are provided by residues 433–435 and glutamate 486; that span reads IGS. L-methionine is bound by residues 433-435 and glutamate 486; that span reads IGS. Residues 517–518 and tryptophan 563 each bind 5-methyltetrahydropteroyltri-L-glutamate; that span reads RC. Aspartate 601 lines the L-homocysteine pocket. Aspartate 601 contacts L-methionine. Glutamate 607 lines the 5-methyltetrahydropteroyltri-L-glutamate pocket. Zn(2+) is bound by residues histidine 643, cysteine 645, and glutamate 667. The active-site Proton donor is the histidine 696. Zn(2+) is bound at residue cysteine 728.

Belongs to the vitamin-B12 independent methionine synthase family. Zn(2+) is required as a cofactor.

The enzyme catalyses 5-methyltetrahydropteroyltri-L-glutamate + L-homocysteine = tetrahydropteroyltri-L-glutamate + L-methionine. It participates in amino-acid biosynthesis; L-methionine biosynthesis via de novo pathway; L-methionine from L-homocysteine (MetE route): step 1/1. In terms of biological role, catalyzes the transfer of a methyl group from 5-methyltetrahydrofolate to homocysteine resulting in methionine formation. In Syntrophotalea carbinolica (strain DSM 2380 / NBRC 103641 / GraBd1) (Pelobacter carbinolicus), this protein is 5-methyltetrahydropteroyltriglutamate--homocysteine methyltransferase.